Consider the following 160-residue polypeptide: SsrA-binding protein (160 aa).

The segment at 133 to 160 is disordered; sequence KKLHDKRETEKERDWNRQKSRLLKGNSQ. The segment covering 137–149 has biased composition (basic and acidic residues); it reads DKRETEKERDWNR.

It belongs to the SmpB family.

It is found in the cytoplasm. Required for rescue of stalled ribosomes mediated by trans-translation. Binds to transfer-messenger RNA (tmRNA), required for stable association of tmRNA with ribosomes. tmRNA and SmpB together mimic tRNA shape, replacing the anticodon stem-loop with SmpB. tmRNA is encoded by the ssrA gene; the 2 termini fold to resemble tRNA(Ala) and it encodes a 'tag peptide', a short internal open reading frame. During trans-translation Ala-aminoacylated tmRNA acts like a tRNA, entering the A-site of stalled ribosomes, displacing the stalled mRNA. The ribosome then switches to translate the ORF on the tmRNA; the nascent peptide is terminated with the 'tag peptide' encoded by the tmRNA and targeted for degradation. The ribosome is freed to recommence translation, which seems to be the essential function of trans-translation. This chain is SsrA-binding protein, found in Agrobacterium fabrum (strain C58 / ATCC 33970) (Agrobacterium tumefaciens (strain C58)).